The primary structure comprises 475 residues: Cytochrome P450 monooxygenase opdE (475 aa).

Residues 10 to 32 (VQNIPVLLLSCGFLAILFRSLVL) traverse the membrane as a helical segment. Cysteine 457 is a heme binding site.

The protein belongs to the cytochrome P450 family. It depends on heme as a cofactor.

The protein resides in the membrane. The protein operates within secondary metabolite biosynthesis. In terms of biological role, cytochrome P450 monooxygenase; part of the gene cluster that mediates the biosynthesis of oxopyrrolidines, polyketide-amino acid hybrid compounds with feature structures of tetramic acid. Does not seem to play a role in oxopyrrolidines A and B biosynthesis. May be involved in further modifications of these oxopyrrolidines. This chain is Cytochrome P450 monooxygenase opdE, found in Penicillium oxalicum (strain 114-2 / CGMCC 5302) (Penicillium decumbens).